Reading from the N-terminus, the 752-residue chain is Catalase-peroxidase 1 (752 aa).

Residues 1–45 (MPPNTPDASDARPPQADTETHSHSESENPVIESPKPKAHAPLTNQ) form a disordered region. The segment at residues 116–244 (WHAAGTYRIF…YGATTMGLIY (129 aa)) is a cross-link (tryptophyl-tyrosyl-methioninium (Trp-Tyr) (with M-270)). Residue His-117 is the Proton acceptor of the active site. Positions 244-270 (YVNPEGPEGKPDPLAAAHDIRETFGRM) form a cross-link, tryptophyl-tyrosyl-methioninium (Tyr-Met) (with W-116). His-285 contributes to the heme b binding site.

This sequence belongs to the peroxidase family. Peroxidase/catalase subfamily. As to quaternary structure, homodimer or homotetramer. The cofactor is heme b. Formation of the three residue Trp-Tyr-Met cross-link is important for the catalase, but not the peroxidase activity of the enzyme.

It carries out the reaction H2O2 + AH2 = A + 2 H2O. It catalyses the reaction 2 H2O2 = O2 + 2 H2O. In terms of biological role, bifunctional enzyme with both catalase and broad-spectrum peroxidase activity. May play a role in the intracellular survival of mycobacteria. The polypeptide is Catalase-peroxidase 1 (Mycolicibacterium fortuitum (Mycobacterium fortuitum)).